A 269-amino-acid chain; its full sequence is Tryptophan synthase alpha chain (269 aa).

Catalysis depends on proton acceptor residues Glu-49 and Asp-60.

The protein belongs to the TrpA family. As to quaternary structure, tetramer of two alpha and two beta chains.

It carries out the reaction (1S,2R)-1-C-(indol-3-yl)glycerol 3-phosphate + L-serine = D-glyceraldehyde 3-phosphate + L-tryptophan + H2O. It participates in amino-acid biosynthesis; L-tryptophan biosynthesis; L-tryptophan from chorismate: step 5/5. The alpha subunit is responsible for the aldol cleavage of indoleglycerol phosphate to indole and glyceraldehyde 3-phosphate. The polypeptide is Tryptophan synthase alpha chain (Actinobacillus pleuropneumoniae serotype 5b (strain L20)).